The primary structure comprises 264 residues: Small ribosomal subunit protein uS2 (264 aa).

Positions 228-264 are disordered; it reads HEDVSAGPVEEQSDEAQAAEQGTEGDTAQLTSSQGRS. Over residues 251–264 the composition is skewed to polar residues; it reads EGDTAQLTSSQGRS.

This sequence belongs to the universal ribosomal protein uS2 family.

The chain is Small ribosomal subunit protein uS2 from Deinococcus radiodurans (strain ATCC 13939 / DSM 20539 / JCM 16871 / CCUG 27074 / LMG 4051 / NBRC 15346 / NCIMB 9279 / VKM B-1422 / R1).